The sequence spans 241 residues: Beta-nerve growth factor (241 aa).

Positions 1 to 18 (MSMLFYTLITAFLIGVQA) are cleaved as a signal peptide. Positions 19 to 121 (EPYTDSNVPE…SFNRTHRSKR (103 aa)) are excised as a propeptide. N-linked (GlcNAc...) asparagine glycans are attached at residues Asn-69, Asn-114, and Asn-166. 3 disulfides stabilise this stretch: Cys-136–Cys-201, Cys-179–Cys-229, and Cys-189–Cys-231. A 1-acyl-sn-glycero-3-phospho-(1D-myo-inositol) is bound by residues Tyr-173 and Lys-209. A 1-acyl-sn-glycero-3-phospho-L-serine is bound at residue Lys-209.

This sequence belongs to the NGF-beta family. In terms of assembly, homodimer. The homodimer interacts with a single NTRK1 chain. The homodimer interacts with a single NGFR chain. The NGF dimer interacts with a single SORCS2 chain (via extracellular domain). The NGF precursor (proNGF) binds to a receptor complex formed by SORT1 and NGFR, which leads to NGF endocytosis. Both mature NGF and the immature NGF precursor (proNGF) interact with SORCS2 and with the heterodimer formed by SORCS2 and NGFR (via extracellular domains). The NGF precursor (proNGF) has much higher affinity for SORCS2 than mature NGF. The NGF precursor (proNGF) has much higher affinity for SORT1 than mature NGF. Interacts with ADAM10 in a divalent cation-dependent manner. Interacts with SORCS3. In terms of tissue distribution, detected in the granule and pyramidal cell layer in the hippocampus.

The protein localises to the secreted. It localises to the endosome lumen. Its function is as follows. Nerve growth factor is important for the development and maintenance of the sympathetic and sensory nervous systems. Extracellular ligand for the NTRK1 and NGFR receptors, activates cellular signaling cascades to regulate neuronal proliferation, differentiation and survival. The immature NGF precursor (proNGF) functions as a ligand for the heterodimeric receptor formed by SORCS2 and NGFR, and activates cellular signaling cascades that lead to inactivation of RAC1 and/or RAC2, reorganization of the actin cytoskeleton and neuronal growth cone collapse. In contrast to mature NGF, the precursor form (proNGF) promotes neuronal apoptosis (in vitro). Inhibits metalloproteinase-dependent proteolysis of platelet glycoprotein VI. Binds lysophosphatidylinositol and lysophosphatidylserine between the two chains of the homodimer. The lipid-bound form promotes histamine relase from mast cells, contrary to the lipid-free form. This chain is Beta-nerve growth factor (Ngf), found in Rattus norvegicus (Rat).